A 693-amino-acid chain; its full sequence is Elongation factor G (693 aa).

Positions 8–283 constitute a tr-type G domain; sequence NRIRNIGIAA…AVIDYLPAPT (276 aa). Residues 17 to 24, 81 to 85, and 135 to 138 each bind GTP; these read AHIDAGKT, DTPGH, and NKMD.

It belongs to the TRAFAC class translation factor GTPase superfamily. Classic translation factor GTPase family. EF-G/EF-2 subfamily.

The protein localises to the cytoplasm. Functionally, catalyzes the GTP-dependent ribosomal translocation step during translation elongation. During this step, the ribosome changes from the pre-translocational (PRE) to the post-translocational (POST) state as the newly formed A-site-bound peptidyl-tRNA and P-site-bound deacylated tRNA move to the P and E sites, respectively. Catalyzes the coordinated movement of the two tRNA molecules, the mRNA and conformational changes in the ribosome. The protein is Elongation factor G of Wolinella succinogenes (strain ATCC 29543 / DSM 1740 / CCUG 13145 / JCM 31913 / LMG 7466 / NCTC 11488 / FDC 602W) (Vibrio succinogenes).